Here is a 190-residue protein sequence, read N- to C-terminus: Elongation factor P-like protein (190 aa).

Belongs to the elongation factor P family.

The sequence is that of Elongation factor P-like protein from Yersinia pestis bv. Antiqua (strain Antiqua).